A 255-amino-acid chain; its full sequence is MSNLLGPRDANGIPVPMTVDESIASMKASLLKKIKRSAYVYRVDCGGCNGCEIEIFATLSPLFDAERFGIKVVPSPRHADILLFTGAVTRAMRSPALRAWQSAPDPKICISYGACGNSGGIFHDLYCVWGGTDKIVPVDVYIPGCPPTPAATLYGFAMALGLLEQKIHARGPGELDEQPAEILHGDMVQPLRVKVDREARRLAGYRYGRQIADDYLTQLGQGEEQVARWLEAENDPRLNEIVSHLNHVVEEARIR.

Positions 45, 51, 115, and 145 each coordinate [4Fe-4S] cluster.

It belongs to the complex I 20 kDa subunit family. As to quaternary structure, FHL comprises of a formate dehydrogenase, unidentified electron carriers and a hydrogenase (isoenzyme 3). In this non-energy conserving pathway molecular hydrogen and carbodioxide from formate are released. The cofactor is [4Fe-4S] cluster.

The chain is Formate hydrogenlyase subunit 7 (hycG) from Escherichia coli (strain K12).